The following is a 250-amino-acid chain: Large ribosomal subunit protein uL13c (250 aa).

The transit peptide at M1–A47 directs the protein to the chloroplast.

Component of the chloroplast large ribosomal subunit (LSU). Mature 70S chloroplast ribosomes of higher plants consist of a small (30S) and a large (50S) subunit. The 30S small subunit contains 1 molecule of ribosomal RNA (16S rRNA) and 24 different proteins. The 50S large subunit contains 3 rRNA molecules (23S, 5S and 4.5S rRNA) and 33 different proteins.

The protein resides in the plastid. The protein localises to the chloroplast. Functionally, component of the chloroplast ribosome (chloro-ribosome), a dedicated translation machinery responsible for the synthesis of chloroplast genome-encoded proteins, including proteins of the transcription and translation machinery and components of the photosynthetic apparatus. This chain is Large ribosomal subunit protein uL13c (RPL13), found in Spinacia oleracea (Spinach).